A 171-amino-acid chain; its full sequence is Protein X (171 aa).

3 consecutive transmembrane segments (helical) span residues 11–31 (SWYQ…IYSL), 38–58 (LAGI…VYLM), and 73–93 (AVIA…WLVI).

Its subcellular location is the virion membrane. The protein is Protein X (VPX) of Mus musculus domesticus (western European house mouse).